Consider the following 37-residue polypeptide: Large ribosomal subunit protein bL36 (37 aa).

Belongs to the bacterial ribosomal protein bL36 family.

This chain is Large ribosomal subunit protein bL36, found in Acidithiobacillus ferrooxidans (strain ATCC 23270 / DSM 14882 / CIP 104768 / NCIMB 8455) (Ferrobacillus ferrooxidans (strain ATCC 23270)).